Consider the following 436-residue polypeptide: tRNA-2-methylthio-N(6)-dimethylallyladenosine synthase (436 aa).

One can recognise an MTTase N-terminal domain in the interval 5–121 (RKLFIKTYGC…LPDMLDRTEG (117 aa)). [4Fe-4S] cluster is bound by residues Cys-14, Cys-50, Cys-84, Cys-158, Cys-162, and Cys-165. One can recognise a Radical SAM core domain in the interval 144–374 (ATRGPAAFLT…TEQQRAAQMA (231 aa)). A TRAM domain is found at 373 to 435 (MAMVGREVGV…PNSLAGERLG (63 aa)).

This sequence belongs to the methylthiotransferase family. MiaB subfamily. As to quaternary structure, monomer. It depends on [4Fe-4S] cluster as a cofactor.

The protein resides in the cytoplasm. It carries out the reaction N(6)-dimethylallyladenosine(37) in tRNA + (sulfur carrier)-SH + AH2 + 2 S-adenosyl-L-methionine = 2-methylsulfanyl-N(6)-dimethylallyladenosine(37) in tRNA + (sulfur carrier)-H + 5'-deoxyadenosine + L-methionine + A + S-adenosyl-L-homocysteine + 2 H(+). Catalyzes the methylthiolation of N6-(dimethylallyl)adenosine (i(6)A), leading to the formation of 2-methylthio-N6-(dimethylallyl)adenosine (ms(2)i(6)A) at position 37 in tRNAs that read codons beginning with uridine. This chain is tRNA-2-methylthio-N(6)-dimethylallyladenosine synthase, found in Cereibacter sphaeroides (strain ATCC 17029 / ATH 2.4.9) (Rhodobacter sphaeroides).